A 383-amino-acid polypeptide reads, in one-letter code: Ovalbumin (383 aa).

Gly-2 bears the N-acetylglycine mark. Residues 22–48 (HHANDNMLYSPFAILSTLAMVFLGAKD) constitute a signal peptide (not cleaved). Ser-69 carries the phosphoserine modification. Cys-74 and Cys-121 are oxidised to a cystine. Asn-293 and Asn-312 each carry an N-linked (GlcNAc...) asparagine glycan. Ser-345 carries the post-translational modification Phosphoserine.

The protein belongs to the serpin family. Ov-serpin subfamily. Post-translationally, the signal sequence is not cleaved. The functional signal for membrane translocation of ovalbumin becomes accessible when the nascent chain is 50 to 60 residues long. The hydrophobic sequence which lies between residues 27 and 43 folds back on the preceding residues to form an amphipathic hairpin structure which is the signal element recognized by the membrane. Major protein of egg white.

It localises to the secreted. In terms of biological role, storage protein of egg white. Lack protease inhibitory activity. The protein is Ovalbumin (SERPINB14) of Coturnix japonica (Japanese quail).